Reading from the N-terminus, the 159-residue chain is Eukaryotic translation initiation factor 5A-5 (159 aa).

Basic and acidic residues predominate over residues 1–12 (MSDEEHHFESKA). Residues 1–23 (MSDEEHHFESKADAGASKTYPQQ) form a disordered region. The residue at position 52 (lysine 52) is a Hypusine.

Belongs to the eIF-5A family. In terms of processing, lys-52 undergoes hypusination, a unique post-translational modification that consists in the addition of a butylamino group from spermidine to lysine side chain, leading to the formation of the unusual amino acid hypusine. eIF-5As are the only known proteins to undergo this modification, which is essential for their function.

Translation factor that promotes translation elongation and termination, particularly upon ribosome stalling at specific amino acid sequence contexts. Binds between the exit (E) and peptidyl (P) site of the ribosome and promotes rescue of stalled ribosome: specifically required for efficient translation of polyproline-containing peptides as well as other motifs that stall the ribosome. Acts as a ribosome quality control (RQC) cofactor by joining the RQC complex to facilitate peptidyl transfer during CAT tailing step. The chain is Eukaryotic translation initiation factor 5A-5 (EIF5A5) from Solanum tuberosum (Potato).